A 743-amino-acid polypeptide reads, in one-letter code: MDDNEDELEEHQELVSDGSVEEEEEVEPDLGPVDSWESFNDRIDGLIFNERCDKSVKKLDERRLAILNRVRQQFREAPKGVAERCQAQKSPIDQRLELSSERLNELVRFGKELVTNVRVANERRELNRRLFEGAQKNQMHVKLQRESVETMARFENIKARWTELEETNEPMLLWDQIEEQKKRIAEIMARKDEMISACQAEVDRMNAKYEFDRERQAQDLCCLVERVDHQVETLKEAYKEHIQMLRQTIEEERQIFADNAVEKWRTFFDAMNANFDEKANLVRAREQFYARQTQQINESQEELTKSTRIRLEKECERLELELRRTRDNVLMNSEKLDYNYQVLQKRNEENVIINNQQKRRVARLHEAIGRTRRGLKNLYNTGKRNIARLSSDIYKLHSNINDMESKAHQARLNNREKFDRIWEINYKELNLLVDRVYHIDRIIHEQQLAMPWSSPVPPIPNINKAKKKRNNILEKFDMRIGRVPKNRVMPNSGVNCKPDIKELPPDSLRLMRNLIRKLSDRGGFLIEERLLKILEPYSEEEKCLVRIDNIFAALRIRHLRDVKELTKVFMPYTYCPNCQPQGLSPRKCAEVFMKDQKPNRLQGAAGGQPDEKEHRSTGDTFLPKSEVAAKRCHNHYLVMEPALCLHAMNLFTSKMHKKMYEHEPGSILNAVNLIQITDAEIRNFWRQFSACFPASKCKLWKTLEHGLNHYVEVLKMRVQYDAEVVFLRRQNEELRHLLQKFTV.

2 stretches are compositionally biased toward acidic residues: residues 1 to 10 and 19 to 28; these read MDDNEDELEE and SVEEEEEVEP. The segment at 1 to 34 is disordered; it reads MDDNEDELEEHQELVSDGSVEEEEEVEPDLGPVD. Coiled-coil stretches lie at residues 175–332 and 395–416; these read DQIE…VLMN and KLHS…NNRE. Residues 599–620 are disordered; the sequence is NRLQGAAGGQPDEKEHRSTGDT. A coiled-coil region spans residues 715–742; that stretch reads KMRVQYDAEVVFLRRQNEELRHLLQKFT.

It belongs to the DRC1 family.

The protein is Dynein regulatory complex protein 1 homolog of Drosophila melanogaster (Fruit fly).